A 340-amino-acid polypeptide reads, in one-letter code: Nicotianamine synthase 9 (340 aa).

It belongs to the nicotianamine synthase (NAS)-like family. As to quaternary structure, homotrimer.

It catalyses the reaction 3 S-adenosyl-L-methionine = nicotianamine + 3 S-methyl-5'-thioadenosine + 3 H(+). In terms of biological role, synthesizes nicotianamine, a polyamine that is the first intermediate in the synthesis of the phytosiderophores of the mugineic acid type found in gramineae which serves as a sensor for the physiological iron status within the plant, and/or might be involved in the transport of iron. In Hordeum vulgare (Barley), this protein is Nicotianamine synthase 9 (NAS9).